The chain runs to 86 residues: Weak neurotoxin 8 (86 aa).

A signal peptide spans 1-21 (MKTLLLTLVVVTIVCLDLGYT). Intrachain disulfides connect Cys24-Cys45, Cys27-Cys32, Cys38-Cys63, Cys67-Cys78, and Cys79-Cys84.

Belongs to the three-finger toxin family. Ancestral subfamily. Orphan group II sub-subfamily. In terms of tissue distribution, expressed by the venom gland.

The protein resides in the secreted. In terms of biological role, binds with low affinity to muscular (alpha-1-beta-1-delta-epsilon/CHRNA1-CHRNB1-CHRND-CHRNE) and very low affinity to neuronal (alpha-7/CHRNA7) nicotinic acetylcholine receptor (nAChR). This is Weak neurotoxin 8 from Naja sputatrix (Malayan spitting cobra).